The primary structure comprises 435 residues: Envelope glycoprotein M (435 aa).

The Intravirion portion of the chain corresponds to Met-1–Arg-36. A helical membrane pass occupies residues Ile-37 to Ile-57. Residues Ala-58–Thr-111 are Virion surface-facing. Residues Tyr-112–Ile-132 traverse the membrane as a helical segment. At His-133–Thr-155 the chain is on the intravirion side. A helical transmembrane segment spans residues Thr-156–Tyr-176. Residues Lys-177 to Gln-178 lie on the Virion surface side of the membrane. The helical transmembrane segment at Ile-179–Tyr-199 threads the bilayer. At Phe-200–Ala-233 the chain is on the intravirion side. A helical membrane pass occupies residues Val-234–Leu-254. Topologically, residues Glu-255–Gly-265 are virion surface. Residues Leu-266 to Ser-288 traverse the membrane as a helical segment. Topologically, residues Glu-289–His-294 are intravirion. A helical membrane pass occupies residues Tyr-295–Ala-317. The Virion surface segment spans residues His-318 to Arg-334. Residues Leu-335–Leu-355 traverse the membrane as a helical segment. The Intravirion segment spans residues Leu-356 to Glu-435.

This sequence belongs to the herpesviridae glycoprotein M family. Interacts (via N-terminus) with gN (via N-terminus). The gM-gN heterodimer forms the gCII complex.

The protein localises to the virion membrane. Its subcellular location is the host Golgi apparatus. The protein resides in the host trans-Golgi network. It localises to the host endosome membrane. It is found in the host nucleus inner membrane. Its function is as follows. Envelope glycoprotein important for virion assembly and egress. Plays a role in the correct incorporation of gH-gL into virion membrane. Directs the glycoprotein N (gN) to the host trans-Golgi network. The protein is Envelope glycoprotein M of Homo sapiens (Human).